The sequence spans 313 residues: Putative S-adenosyl-L-methionine-dependent methyltransferase MAV_4573 (313 aa).

S-adenosyl-L-methionine-binding positions include Asp129 and 158-159; that span reads DL.

The protein belongs to the UPF0677 family.

Functionally, exhibits S-adenosyl-L-methionine-dependent methyltransferase activity. The sequence is that of Putative S-adenosyl-L-methionine-dependent methyltransferase MAV_4573 from Mycobacterium avium (strain 104).